The sequence spans 349 residues: Heat-inducible transcription repressor HrcA (349 aa).

It belongs to the HrcA family.

In terms of biological role, negative regulator of class I heat shock genes (grpE-dnaK-dnaJ and groELS operons). Prevents heat-shock induction of these operons. The chain is Heat-inducible transcription repressor HrcA from Lactobacillus acidophilus (strain ATCC 700396 / NCK56 / N2 / NCFM).